We begin with the raw amino-acid sequence, 251 residues long: Coproheme decarboxylase (251 aa).

Residues Arg133, 147 to 151, His174, Gln187, and Ser225 each bind Fe-coproporphyrin III; that span reads YPMSK. Tyr147 is an active-site residue.

It belongs to the ChdC family. Type 1 subfamily. It depends on Fe-coproporphyrin III as a cofactor.

The enzyme catalyses Fe-coproporphyrin III + 2 H2O2 + 2 H(+) = heme b + 2 CO2 + 4 H2O. The catalysed reaction is Fe-coproporphyrin III + H2O2 + H(+) = harderoheme III + CO2 + 2 H2O. It catalyses the reaction harderoheme III + H2O2 + H(+) = heme b + CO2 + 2 H2O. The protein operates within porphyrin-containing compound metabolism; protoheme biosynthesis. Functionally, involved in coproporphyrin-dependent heme b biosynthesis. Catalyzes the decarboxylation of Fe-coproporphyrin III (coproheme) to heme b (protoheme IX), the last step of the pathway. The reaction occurs in a stepwise manner with a three-propionate intermediate. This chain is Coproheme decarboxylase, found in Listeria innocua serovar 6a (strain ATCC BAA-680 / CLIP 11262).